We begin with the raw amino-acid sequence, 251 residues long: Pyridoxine 5'-phosphate synthase (251 aa).

3-amino-2-oxopropyl phosphate-binding residues include N8 and R19. H44 serves as the catalytic Proton acceptor. The 1-deoxy-D-xylulose 5-phosphate site is built by R46 and H51. E76 functions as the Proton acceptor in the catalytic mechanism. A 1-deoxy-D-xylulose 5-phosphate-binding site is contributed by T106. Catalysis depends on H200, which acts as the Proton donor. Residues D201 and 223 to 224 (GH) contribute to the 3-amino-2-oxopropyl phosphate site.

Belongs to the PNP synthase family. As to quaternary structure, homooctamer; tetramer of dimers.

The protein localises to the cytoplasm. It catalyses the reaction 3-amino-2-oxopropyl phosphate + 1-deoxy-D-xylulose 5-phosphate = pyridoxine 5'-phosphate + phosphate + 2 H2O + H(+). The protein operates within cofactor biosynthesis; pyridoxine 5'-phosphate biosynthesis; pyridoxine 5'-phosphate from D-erythrose 4-phosphate: step 5/5. Its function is as follows. Catalyzes the complicated ring closure reaction between the two acyclic compounds 1-deoxy-D-xylulose-5-phosphate (DXP) and 3-amino-2-oxopropyl phosphate (1-amino-acetone-3-phosphate or AAP) to form pyridoxine 5'-phosphate (PNP) and inorganic phosphate. This chain is Pyridoxine 5'-phosphate synthase, found in Agrobacterium fabrum (strain C58 / ATCC 33970) (Agrobacterium tumefaciens (strain C58)).